The following is a 577-amino-acid chain: Pentatricopeptide repeat-containing protein At2g01390 (577 aa).

PPR repeat units follow at residues 121 to 155 (DHFT…GVLI), 156 to 190 (DTVT…GCEP), 191 to 225 (TVVS…RVSP), 226 to 260 (NCHT…GVQP), 261 to 295 (DKAA…GVVL), 382 to 416 (DSFV…GIHL), 417 to 451 (KKSA…QHSL), 452 to 482 (GCYQ…LPDD), 485 to 519 (GVAA…EIMP), and 520 to 554 (SLGT…LVAS).

Belongs to the PPR family. P subfamily.

The polypeptide is Pentatricopeptide repeat-containing protein At2g01390 (Arabidopsis thaliana (Mouse-ear cress)).